The primary structure comprises 317 residues: 3'-5' exoribonuclease YhaM (317 aa).

The segment at residues F17–S90 is a DNA-binding region (OB). The HD domain maps to H163 to K279.

Belongs to the YhaM family.

Its function is as follows. Shows a 3'-5' exoribonuclease activity. The polypeptide is 3'-5' exoribonuclease YhaM (Oceanobacillus iheyensis (strain DSM 14371 / CIP 107618 / JCM 11309 / KCTC 3954 / HTE831)).